The following is a 58-amino-acid chain: Sec-independent protein translocase protein TatA (58 aa).

A helical membrane pass occupies residues 1-21 (MLSNIGFPGLILILVAILILF).

The protein belongs to the TatA/E family. Forms a complex with TatC.

It is found in the cell membrane. Its function is as follows. Part of the twin-arginine translocation (Tat) system that transports large folded proteins containing a characteristic twin-arginine motif in their signal peptide across membranes. TatA could form the protein-conducting channel of the Tat system. This chain is Sec-independent protein translocase protein TatA, found in Bacillus cytotoxicus (strain DSM 22905 / CIP 110041 / 391-98 / NVH 391-98).